A 231-amino-acid polypeptide reads, in one-letter code: Large ribosomal subunit protein uL1 (231 aa).

It belongs to the universal ribosomal protein uL1 family. In terms of assembly, part of the 50S ribosomal subunit.

In terms of biological role, binds directly to 23S rRNA. The L1 stalk is quite mobile in the ribosome, and is involved in E site tRNA release. Protein L1 is also a translational repressor protein, it controls the translation of the L11 operon by binding to its mRNA. This Teredinibacter turnerae (strain ATCC 39867 / T7901) protein is Large ribosomal subunit protein uL1.